A 392-amino-acid polypeptide reads, in one-letter code: Formate-dependent phosphoribosylglycinamide formyltransferase (392 aa).

N(1)-(5-phospho-beta-D-ribosyl)glycinamide contacts are provided by residues 22–23 and E82; that span reads EL. Residues R114, K155, 160 to 165, 195 to 198, and E203 contribute to the ATP site; these read SSGKGQ and EGVV. The ATP-grasp domain maps to 119 to 308; the sequence is RLAAEELGLP…EFALHVRAFL (190 aa). Mg(2+) is bound by residues E267 and E279. Residues D286, K355, and 362 to 363 each bind N(1)-(5-phospho-beta-D-ribosyl)glycinamide; that span reads RR.

It belongs to the PurK/PurT family. Homodimer.

It catalyses the reaction N(1)-(5-phospho-beta-D-ribosyl)glycinamide + formate + ATP = N(2)-formyl-N(1)-(5-phospho-beta-D-ribosyl)glycinamide + ADP + phosphate + H(+). It participates in purine metabolism; IMP biosynthesis via de novo pathway; N(2)-formyl-N(1)-(5-phospho-D-ribosyl)glycinamide from N(1)-(5-phospho-D-ribosyl)glycinamide (formate route): step 1/1. Its function is as follows. Involved in the de novo purine biosynthesis. Catalyzes the transfer of formate to 5-phospho-ribosyl-glycinamide (GAR), producing 5-phospho-ribosyl-N-formylglycinamide (FGAR). Formate is provided by PurU via hydrolysis of 10-formyl-tetrahydrofolate. This is Formate-dependent phosphoribosylglycinamide formyltransferase from Salmonella schwarzengrund (strain CVM19633).